The sequence spans 375 residues: Chaperone protein DnaJ (375 aa).

The region spanning 5-70 (DYYEVLGVER…GKRSAYDQYG (66 aa)) is the J domain. The CR-type zinc finger occupies 134-212 (GTTVTIRVPT…CHGQGRVEES (79 aa)). The Zn(2+) site is built by Cys-147, Cys-150, Cys-164, Cys-167, Cys-186, Cys-189, Cys-200, and Cys-203. CXXCXGXG motif repeat units lie at residues 147–154 (CKTCDGTG), 164–171 (CTTCGGIG), 186–193 (CPRCHGSG), and 200–207 (CGSCHGQG).

It belongs to the DnaJ family. In terms of assembly, homodimer. Zn(2+) is required as a cofactor.

The protein localises to the cytoplasm. Its function is as follows. Participates actively in the response to hyperosmotic and heat shock by preventing the aggregation of stress-denatured proteins and by disaggregating proteins, also in an autonomous, DnaK-independent fashion. Unfolded proteins bind initially to DnaJ; upon interaction with the DnaJ-bound protein, DnaK hydrolyzes its bound ATP, resulting in the formation of a stable complex. GrpE releases ADP from DnaK; ATP binding to DnaK triggers the release of the substrate protein, thus completing the reaction cycle. Several rounds of ATP-dependent interactions between DnaJ, DnaK and GrpE are required for fully efficient folding. Also involved, together with DnaK and GrpE, in the DNA replication of plasmids through activation of initiation proteins. The chain is Chaperone protein DnaJ from Ectopseudomonas mendocina (strain ymp) (Pseudomonas mendocina).